The chain runs to 361 residues: tRNA-specific 2-thiouridylase MnmA (361 aa).

ATP is bound by residues 11–18 (GMSGGVDS) and M37. C106 functions as the Nucleophile in the catalytic mechanism. Residues C106 and C202 are joined by a disulfide bond. Residue G130 coordinates ATP. Positions 152–154 (KDQ) are interaction with tRNA. The Cysteine persulfide intermediate role is filled by C202. Residues 308-309 (RY) form an interaction with tRNA region.

This sequence belongs to the MnmA/TRMU family.

It is found in the cytoplasm. The catalysed reaction is S-sulfanyl-L-cysteinyl-[protein] + uridine(34) in tRNA + AH2 + ATP = 2-thiouridine(34) in tRNA + L-cysteinyl-[protein] + A + AMP + diphosphate + H(+). In terms of biological role, catalyzes the 2-thiolation of uridine at the wobble position (U34) of tRNA, leading to the formation of s(2)U34. This is tRNA-specific 2-thiouridylase MnmA from Clostridium botulinum (strain Alaska E43 / Type E3).